A 131-amino-acid chain; its full sequence is Ribosome-binding factor A (131 aa).

The interval 110-131 (QMNLGEDNEDNEDKENNDPGEE) is disordered. Positions 115–131 (EDNEDNEDKENNDPGEE) are enriched in acidic residues.

This sequence belongs to the RbfA family. In terms of assembly, monomer. Binds 30S ribosomal subunits, but not 50S ribosomal subunits or 70S ribosomes.

The protein localises to the cytoplasm. In terms of biological role, one of several proteins that assist in the late maturation steps of the functional core of the 30S ribosomal subunit. Associates with free 30S ribosomal subunits (but not with 30S subunits that are part of 70S ribosomes or polysomes). Required for efficient processing of 16S rRNA. May interact with the 5'-terminal helix region of 16S rRNA. In Natranaerobius thermophilus (strain ATCC BAA-1301 / DSM 18059 / JW/NM-WN-LF), this protein is Ribosome-binding factor A.